The following is a 951-amino-acid chain: Valine--tRNA ligase (951 aa).

Residues 42-52 (PNVTGSLHMGH) carry the 'HIGH' region motif. Residues 554-558 (KMSKS) carry the 'KMSKS' region motif. Lys557 contacts ATP. Positions 880-944 (AGLINKEDEL…AEAKAKLIEQ (65 aa)) form a coiled coil.

It belongs to the class-I aminoacyl-tRNA synthetase family. ValS type 1 subfamily. As to quaternary structure, monomer.

The protein localises to the cytoplasm. The enzyme catalyses tRNA(Val) + L-valine + ATP = L-valyl-tRNA(Val) + AMP + diphosphate. Its function is as follows. Catalyzes the attachment of valine to tRNA(Val). As ValRS can inadvertently accommodate and process structurally similar amino acids such as threonine, to avoid such errors, it has a 'posttransfer' editing activity that hydrolyzes mischarged Thr-tRNA(Val) in a tRNA-dependent manner. The protein is Valine--tRNA ligase of Shigella flexneri.